Reading from the N-terminus, the 491-residue chain is NADH-quinone oxidoreductase subunit N 1 (491 aa).

Transmembrane regions (helical) follow at residues 15-35 (VLGMPAFLMIWAMLVLIVDMF), 41-61 (VLLTLSLIGLGVTAALGALDY), 77-97 (FGVLVNWILLAGTALTLLIAF), 105-125 (LSQGEFYPLVLFATSGMLFLV), 130-150 (LVTIFIGVETLSIALYVLTGF), 165-185 (LLLGGFAAGFLVYGIALIYGM), 211-231 (PILLAGVGFVLIALGFKVSMF), 247-269 (PVTAYMSVATKGAAFAAMLRFLN), 279-299 (WQLLFGLFAAATMAYGNIVAV), 307-327 (MLAYSSIAHAGYMLLGVLAAS), 333-353 (AFTVYLLAYTLTNLGAFAVLI), 378-398 (LALAMTVFMFSLAGVPPTAGF), 416-436 (LAIIGVVTSVISAFFYLRVIV), and 459-479 (LGVIVAVIGIIAVGILPNIFT).

The protein belongs to the complex I subunit 2 family. NDH-1 is composed of 14 different subunits. Subunits NuoA, H, J, K, L, M, N constitute the membrane sector of the complex.

It is found in the cell membrane. The enzyme catalyses a quinone + NADH + 5 H(+)(in) = a quinol + NAD(+) + 4 H(+)(out). Functionally, NDH-1 shuttles electrons from NADH, via FMN and iron-sulfur (Fe-S) centers, to quinones in the respiratory chain. The immediate electron acceptor for the enzyme in this species is believed to be ubiquinone. Couples the redox reaction to proton translocation (for every two electrons transferred, four hydrogen ions are translocated across the cytoplasmic membrane), and thus conserves the redox energy in a proton gradient. This chain is NADH-quinone oxidoreductase subunit N 1, found in Herpetosiphon aurantiacus (strain ATCC 23779 / DSM 785 / 114-95).